A 226-amino-acid polypeptide reads, in one-letter code: CRISPR-associated protein Cas5 (226 aa).

This sequence belongs to the CRISPR-associated protein Cas5 family. Subtype I-A/Apern subfamily. As to quaternary structure, can form a Cascade complex with Csa5, Cas7, Cas3, Cas3' and Cas8a2.

Its function is as follows. CRISPR (clustered regularly interspaced short palindromic repeat) is an adaptive immune system that provides protection against mobile genetic elements (viruses, transposable elements and conjugative plasmids). CRISPR clusters contain spacers, sequences complementary to antecedent mobile elements, and target invading nucleic acids. CRISPR clusters are transcribed and processed into CRISPR RNA (crRNA). The sequence is that of CRISPR-associated protein Cas5 (cas5a) from Thermoproteus tenax (strain ATCC 35583 / DSM 2078 / JCM 9277 / NBRC 100435 / Kra 1).